We begin with the raw amino-acid sequence, 379 residues long: Chaperone protein DnaJ (379 aa).

Residues 5-69 form the J domain; that stretch reads EYYERLGVDK…QKRAAYDQYG (65 aa). The CR-type zinc-finger motif lies at 141–223; the sequence is GVEKQVKYNR…CHGSGHEKVA (83 aa). Cys154, Cys157, Cys171, Cys174, Cys197, Cys200, and Cys214 together coordinate Zn(2+). CXXCXGXG motif repeat units follow at residues 154–161, 171–178, 197–204, and 211–218; these read CHTCGGSG, CHKCGGRG, CDVCHGTG, and STTCHGSG.

It belongs to the DnaJ family. Homodimer. Zn(2+) is required as a cofactor.

It localises to the cytoplasm. Participates actively in the response to hyperosmotic and heat shock by preventing the aggregation of stress-denatured proteins and by disaggregating proteins, also in an autonomous, DnaK-independent fashion. Unfolded proteins bind initially to DnaJ; upon interaction with the DnaJ-bound protein, DnaK hydrolyzes its bound ATP, resulting in the formation of a stable complex. GrpE releases ADP from DnaK; ATP binding to DnaK triggers the release of the substrate protein, thus completing the reaction cycle. Several rounds of ATP-dependent interactions between DnaJ, DnaK and GrpE are required for fully efficient folding. Also involved, together with DnaK and GrpE, in the DNA replication of plasmids through activation of initiation proteins. The polypeptide is Chaperone protein DnaJ (Lactococcus lactis subsp. cremoris (Streptococcus cremoris)).